We begin with the raw amino-acid sequence, 551 residues long: Calcium-dependent protein kinase 19 (551 aa).

A lipid anchor (N-myristoyl glycine) is attached at G2. The segment at V12–R46 is disordered. The span at T25–R39 shows a compositional bias: basic and acidic residues. One can recognise a Protein kinase domain in the interval Y98 to I357. Residues L104–T112 and K127 contribute to the ATP site. The active-site Proton acceptor is the D222. A Phosphoserine modification is found at S263. The segment at A363–I393 is autoinhibitory domain. EF-hand domains are found at residues E400–R435, L436–V471, E472–G507, and I512–S542. D413, D415, S417, T419, E424, D449, D451, N453, T455, E460, D485, D487, S489, E496, D520, D522, D524, S526, and E531 together coordinate Ca(2+).

It belongs to the protein kinase superfamily. Ser/Thr protein kinase family. CDPK subfamily.

It localises to the membrane. The enzyme catalyses L-seryl-[protein] + ATP = O-phospho-L-seryl-[protein] + ADP + H(+). The catalysed reaction is L-threonyl-[protein] + ATP = O-phospho-L-threonyl-[protein] + ADP + H(+). Its activity is regulated as follows. Activated by calcium. Autophosphorylation may play an important role in the regulation of the kinase activity. In terms of biological role, may play a role in signal transduction pathways that involve calcium as a second messenger. The protein is Calcium-dependent protein kinase 19 (CPK19) of Arabidopsis thaliana (Mouse-ear cress).